Reading from the N-terminus, the 1209-residue chain is MESAPKTVSLPVSPLGYVYARQKASLQTGTVSLTAARSVDSDLAVLPVIRGLTVEQTFTTNVAVVAGSKTTGLGGTGITLKLTPSHFNPSAFVFYGGSVIGASSNAPNLTRACEAARRRFGFSAFSSPPVENAVETSGEEICASLNLSPETTALYLVVTESFKEMVYVCNTFLHYGGTSTVTIDGQDAMKIPIYPVQLYMPDVNRLASEPFNAKHRSIGDEFVYSRPFFNSDLCRLLHGYVLGPAAVALRVRNLDGVARGAAHLALDENHEGSVLPQDVTFTLFDSTQGNAGKGSGRAQRQGDGSGSKNSASSGIERRLASVMAADTALSVDSIMGAGIYDTELPSVEDWPVLSSGDDTESLEALGAYAARLSGLVGAMVFSANSVLYMTEVDDGGPADGKDGSNPSYHRFYLIAAPYVAGNPQTDKDGRVLPHTADQQAAPINGSNQEFSLDYLALACGFCPQILARLLFYLERCDAGTFGGRNETDALRYLANTLESDVPCGLCNQATRPACAHTTLHRLRQRLPRFGAPVRAPIGIFGTMNSAYSDCDVLGNYASYGALKRPNDNEAPKSIMQDTYRATMERLVNELEQAKLIDKETLAQASPCSAPTSVVHDQASFIGLLSNIKDTIEGAAEQFMRTLVEARDFKIREGLADANHTMSISLDPYSSSFCPVTSFLARRTVFAVLQDLVLSQCHCLFYGQSVEGRNFRNQFQPVLRRRFLDMLNGGFITAKTVTVTVSDSGVLAPDLTRPASEPPTKDYDGDMARVSMEVLRDLRVKNRVLFSNGGANMSEAARARVAGMASAYRRPDKGSNILNGAVGFLVKQYHGVLFPRGHPPGIDTPNPQWFWTLLQRNQMPARLLSKEDIETITAIKRFSDEYSAINFINLTPNNIGELAQFYFANLVLKYCDHSQYFINGLTAIVVGSRRPRDPAAVLAWIDRTINGAADVEPAAQEVLQRLGSNPAAWTGTFTSTNMVRYVMDQRPMVVIGLSISKYNGSAGNNRVFQAGNWNGLNGGKNVCPLMAFDRTRRFVLACPRVGFTCEAGGFGTGVRENTLSEQVRGIVSEGGPMVQTAVFAAVLHALGARTQHLAVDDWIGLVDDEFLAASLDALNATVVDQFGEWSVEAAQELVKNMEAQTTAGAVAAGEGAFDFGACVGDTPQQSTSAFNGGLAMAAAPAGQKRSLPDDILFDMGAPPEKKSGLTFDML.

The disordered stretch occupies residues 290–312 (NAGKGSGRAQRQGDGSGSKNSAS). A zinc finger lies at 503-516 (CGLCNQATRPACAH). Positions 849–850 (FW) match the Required for filament formation motif. The tract at residues 1182–1209 (QKRSLPDDILFDMGAPPEKKSGLTFDML) is required for nuclear localization.

Belongs to the herpesviridae major DNA-binding protein family. As to quaternary structure, homooligomers. Forms double-helical filaments necessary for the formation of replication compartments within the host nucleus. Interacts with the origin-binding protein. Interacts with the helicase primase complex; this interaction stimulates primer synthesis activity of the helicase-primase complex. Interacts with the DNA polymerase. Interacts with the alkaline exonuclease; this interaction increases its nuclease processivity.

The protein localises to the host nucleus. Plays several crucial roles in viral infection. Participates in the opening of the viral DNA origin to initiate replication by interacting with the origin-binding protein. May disrupt loops, hairpins and other secondary structures present on ssDNA to reduce and eliminate pausing of viral DNA polymerase at specific sites during elongation. Promotes viral DNA recombination by performing strand-transfer, characterized by the ability to transfer a DNA strand from a linear duplex to a complementary single-stranded DNA circle. Can also catalyze the renaturation of complementary single strands. Additionally, reorganizes the host cell nucleus, leading to the formation of prereplicative sites and replication compartments. This process is driven by the protein which can form double-helical filaments in the absence of DNA. The sequence is that of Major DNA-binding protein from Equine herpesvirus 1 (strain V592) (EHV-1).